A 109-amino-acid polypeptide reads, in one-letter code: Iron-sulfur assembly protein IscA-like 3, mitochondrial (109 aa).

A mitochondrion-targeting transit peptide spans 1-18 (MRKQVLALSDTAAARIRQ). Fe cation-binding residues include cysteine 37, cysteine 100, and cysteine 102.

It belongs to the HesB/IscA family. Homodimer; may form tetramers and higher multimers. Fe cation serves as cofactor.

It is found in the mitochondrion. Involved in the assembly of mitochondrial iron-sulfur proteins. Probably involved in the binding of an intermediate of Fe/S cluster assembly. The sequence is that of Iron-sulfur assembly protein IscA-like 3, mitochondrial from Arabidopsis thaliana (Mouse-ear cress).